Here is a 38-residue protein sequence, read N- to C-terminus: Defensin D7 (38 aa).

This sequence belongs to the DEFL family. Group IV subfamily. In terms of tissue distribution, distributed in the epidermal cell layer of leaves and in the subepidermal layer region of stems. Not in roots.

It is found in the secreted. Its subcellular location is the cell wall. Antimicrobial peptide. Active against Fusarium spp., Gram-positive and Gram-negative bacterial pathogens. The protein is Defensin D7 of Spinacia oleracea (Spinach).